Consider the following 747-residue polypeptide: Elongation factor G, mitochondrial (747 aa).

The N-terminal 32 residues, 1-32 (MTLITRVLNSNLPLRLSALKTVRQLQCGYSSH), are a transit peptide targeting the mitochondrion. One can recognise a tr-type G domain in the interval 42–319 (ERIRNIGISA…AIIDYLPNPG (278 aa)). Residues 51-58 (AHIDSGKT), 118-122 (DTPGH), and 172-175 (NKLD) each bind GTP.

The protein belongs to the TRAFAC class translation factor GTPase superfamily. Classic translation factor GTPase family. EF-G/EF-2 subfamily.

It is found in the mitochondrion. Its pathway is protein biosynthesis; polypeptide chain elongation. Mitochondrial GTPase that catalyzes the GTP-dependent ribosomal translocation step during translation elongation. During this step, the ribosome changes from the pre-translocational (PRE) to the post-translocational (POST) state as the newly formed A-site-bound peptidyl-tRNA and P-site-bound deacylated tRNA move to the P and E sites, respectively. Catalyzes the coordinated movement of the two tRNA molecules, the mRNA and conformational changes in the ribosome. Essential during development as it acts as a retrograde signal from mitochondria to the nucleus to slow down cell proliferation if mitochondrial energy output is low. The polypeptide is Elongation factor G, mitochondrial (Drosophila virilis (Fruit fly)).